A 462-amino-acid chain; its full sequence is Cysteine--tRNA ligase (462 aa).

Cysteine 24 is a binding site for Zn(2+). The 'HIGH' region signature appears at 26-36 (PTVYDDAHLGH). 3 residues coordinate Zn(2+): cysteine 199, histidine 224, and glutamate 228. The 'KMSKS' region motif lies at 256-260 (KMSKS). ATP is bound at residue lysine 259.

The protein belongs to the class-I aminoacyl-tRNA synthetase family. Monomer. The cofactor is Zn(2+).

Its subcellular location is the cytoplasm. It carries out the reaction tRNA(Cys) + L-cysteine + ATP = L-cysteinyl-tRNA(Cys) + AMP + diphosphate. The chain is Cysteine--tRNA ligase from Campylobacter jejuni subsp. jejuni serotype O:23/36 (strain 81-176).